We begin with the raw amino-acid sequence, 304 residues long: KIN17-like protein (304 aa).

The C2H2-type zinc finger occupies 26 to 50 (WYCSACQKQMRDENGFKCHTQSEGH). 2 disordered regions span residues 204 to 228 (IDLSKKGNPIQLNLSSSSDSHSAQN) and 261 to 291 (LNKSRKKNNKDSLDQGQNVKRPRSAVEDIIA).

This sequence belongs to the KIN17 family.

Its subcellular location is the nucleus. The protein resides in the nucleolus. The polypeptide is KIN17-like protein (Schizosaccharomyces pombe (strain 972 / ATCC 24843) (Fission yeast)).